The chain runs to 980 residues: Probable outer membrane protein PmpH (980 aa).

The first 24 residues, 1–24, serve as a signal peptide directing secretion; it reads MPFSLRSTSFCFLACLCSYSYGLA. The Autotransporter domain maps to 661-980; that stretch reads GELVPNSLWV…FVSLGLNRIF (320 aa).

Belongs to the PMP outer membrane protein family.

The protein localises to the secreted. It is found in the cell wall. The protein resides in the cell outer membrane. The protein is Probable outer membrane protein PmpH (pmpH) of Chlamydia muridarum (strain MoPn / Nigg).